The chain runs to 52 residues: Histone H2A (52 aa).

A disordered region spans residues 1 to 25 (MSGRGKTGGKARAKAKTRSSRAGLQ). At Ser2 the chain carries N-acetylserine. Ser2 is subject to Phosphoserine. Position 6 is an N6-(2-hydroxyisobutyryl)lysine (Lys6). N6-acetyllysine is present on Lys6. The segment covering 7–19 (TGGKARAKAKTRS) has biased composition (basic residues). Position 10 is an N6-(2-hydroxyisobutyryl)lysine; alternate (Lys10). Lys10 carries the post-translational modification N6-lactoyllysine; alternate. Lys10 is subject to N6-succinyllysine. Glycyl lysine isopeptide (Lys-Gly) (interchain with G-Cter in ubiquitin) cross-links involve residues Lys14 and Lys16. Lys37 carries the N6-(2-hydroxyisobutyryl)lysine; alternate modification.

The nucleosome is a histone octamer containing two molecules each of H2A, H2B, H3 and H4 assembled in one H3-H4 heterotetramer and two H2A-H2B heterodimers. The octamer wraps approximately 147 bp of DNA. Post-translationally, acetylation is not necessary for the antibacterial activity. In terms of processing, monoubiquitination in C-terminus gives a specific tag for epigenetic transcriptional repression. Following DNA double-strand breaks (DSBs), it is ubiquitinated through 'Lys-63' linkage of ubiquitin moieties, leading to the recruitment of repair proteins to sites of DNA damage. H2AK119Ub and ionizing radiation-induced 'Lys-63'-linked ubiquitination are distinct events. Phosphorylation on Ser-2 is enhanced during mitosis. Phosphorylation on Ser-2 directly represses transcription.

The protein localises to the nucleus. It localises to the chromosome. Its subcellular location is the secreted. Functionally, core component of nucleosome. Nucleosomes wrap and compact DNA into chromatin, limiting DNA accessibility to the cellular machineries which require DNA as a template. Histones thereby play a central role in transcription regulation, DNA repair, DNA replication and chromosomal stability. DNA accessibility is regulated via a complex set of post-translational modifications of histones, also called histone code, and nucleosome remodeling. In terms of biological role, hipposin shows strong antimicrobial activity against several Gram-positive and Gram-negative bacteria. The protein is Histone H2A of Hippoglossus hippoglossus (Atlantic halibut).